A 325-amino-acid chain; its full sequence is E3 ubiquitin-protein ligase EL5 (325 aa).

Positions Met1–Gly29 are disordered. Residues Ser15–Ala28 are compositionally biased toward low complexity. The chain crosses the membrane as a helical span at residues Ile38–Leu58. Positions Thr70–Arg105 are disordered. The span at Arg77 to Ser87 shows a compositional bias: basic residues. Positions Gly88–Val99 are enriched in gly residues. The RING-type; atypical zinc-finger motif lies at Cys134–Arg176. 2 disordered regions span residues Gly267–Glu289 and Ala303–Asn325. Low complexity predominate over residues Ala268 to Gly281.

The protein resides in the cell membrane. It carries out the reaction S-ubiquitinyl-[E2 ubiquitin-conjugating enzyme]-L-cysteine + [acceptor protein]-L-lysine = [E2 ubiquitin-conjugating enzyme]-L-cysteine + N(6)-ubiquitinyl-[acceptor protein]-L-lysine.. It functions in the pathway protein modification; protein ubiquitination. Functionally, functions as an E3 ubiquitin-protein ligase in cooperation with the E2 ubiquitin conjugating enzymes UBC5A and UBC5B. Involved in root development. Required for the maintenance of cell viability after the initiation of root primordial formation. May mediate the degradation of cytotoxic proteins produced in root cells after the actions of auxin, cytokinin and jasmonic acid. Mediates 'Lys-48'-linked polyubiquitination of MBP in vitro. This chain is E3 ubiquitin-protein ligase EL5 (EL5.1), found in Oryza sativa subsp. japonica (Rice).